Reading from the N-terminus, the 135-residue chain is Retinol-binding protein 5 (135 aa).

It belongs to the calycin superfamily. Fatty-acid binding protein (FABP) family.

The protein localises to the cytoplasm. Its function is as follows. Intracellular transport of retinol. This is Retinol-binding protein 5 (RBP5) from Pongo abelii (Sumatran orangutan).